A 456-amino-acid polypeptide reads, in one-letter code: ATP synthase subunit beta 1 (456 aa).

152 to 159 (GGAGVGKS) is a binding site for ATP.

It belongs to the ATPase alpha/beta chains family. F-type ATPases have 2 components, CF(1) - the catalytic core - and CF(0) - the membrane proton channel. CF(1) has five subunits: alpha(3), beta(3), gamma(1), delta(1), epsilon(1). CF(0) has three main subunits: a(1), b(2) and c(9-12). The alpha and beta chains form an alternating ring which encloses part of the gamma chain. CF(1) is attached to CF(0) by a central stalk formed by the gamma and epsilon chains, while a peripheral stalk is formed by the delta and b chains.

The protein localises to the cell membrane. The catalysed reaction is ATP + H2O + 4 H(+)(in) = ADP + phosphate + 5 H(+)(out). Its function is as follows. Produces ATP from ADP in the presence of a proton gradient across the membrane. The catalytic sites are hosted primarily by the beta subunits. This chain is ATP synthase subunit beta 1, found in Listeria welshimeri serovar 6b (strain ATCC 35897 / DSM 20650 / CCUG 15529 / CIP 8149 / NCTC 11857 / SLCC 5334 / V8).